The primary structure comprises 119 residues: DNA-binding protein inhibitor ID-3 (119 aa).

Positions 28–80 (RGKSPSAEEPLSLLDDMNHCYSRLRELVPGVPRGTQLSQVEILQRVIDYILDL) constitute a bHLH domain.

As to quaternary structure, homodimer, and heterodimer with other HLH proteins. Interacts with COPS5 and COPS7A. Interacts with IFI204. Interacts with GATA4 and NKX2-5. Interacts with ANKRD2; both proteins cooperate in myoblast differentiation. Interacts with CLOCK and BMAL1. Phosphorylated in vitro by CDC2 and PKC.

The protein localises to the nucleus. In terms of biological role, transcriptional regulator (lacking a basic DNA binding domain) which negatively regulates the basic helix-loop-helix (bHLH) transcription factors by forming heterodimers and inhibiting their DNA binding and transcriptional activity. Implicated in regulating a variety of cellular processes, including cellular growth, senescence, differentiation, apoptosis, angiogenesis, and neoplastic transformation. Involved in myogenesis by inhibiting skeletal muscle and cardiac myocyte differentiation and promoting muscle precursor cells proliferation. Inhibits the binding of E2A-containing protein complexes to muscle creatine kinase E-box enhancer. Regulates the circadian clock by repressing the transcriptional activator activity of the CLOCK-BMAL1 heterodimer. The polypeptide is DNA-binding protein inhibitor ID-3 (Id3) (Rattus norvegicus (Rat)).